The following is a 130-amino-acid chain: ATP synthase epsilon chain (130 aa).

This sequence belongs to the ATPase epsilon chain family. In terms of assembly, F-type ATPases have 2 components, CF(1) - the catalytic core - and CF(0) - the membrane proton channel. CF(1) has five subunits: alpha(3), beta(3), gamma(1), delta(1), epsilon(1). CF(0) has three main subunits: a, b and c.

Its subcellular location is the cell membrane. Produces ATP from ADP in the presence of a proton gradient across the membrane. This Mycoplasmoides gallisepticum (strain R(low / passage 15 / clone 2)) (Mycoplasma gallisepticum) protein is ATP synthase epsilon chain (atpC).